The chain runs to 179 residues: Orotate phosphoribosyltransferase (179 aa).

5-phospho-alpha-D-ribose 1-diphosphate-binding positions include R24, R89, K90, K93, and 115 to 123; that span reads EDVITTGGA. The orotate site is built by T119 and R147.

This sequence belongs to the purine/pyrimidine phosphoribosyltransferase family. PyrE subfamily. As to quaternary structure, homodimer. Requires Mg(2+) as cofactor.

It carries out the reaction orotidine 5'-phosphate + diphosphate = orotate + 5-phospho-alpha-D-ribose 1-diphosphate. The protein operates within pyrimidine metabolism; UMP biosynthesis via de novo pathway; UMP from orotate: step 1/2. Catalyzes the transfer of a ribosyl phosphate group from 5-phosphoribose 1-diphosphate to orotate, leading to the formation of orotidine monophosphate (OMP). The sequence is that of Orotate phosphoribosyltransferase from Nocardioides sp. (strain ATCC BAA-499 / JS614).